Consider the following 399-residue polypeptide: Semaphorin-like protein 139 (399 aa).

The first 14 residues, 1 to 14 (MIPLLFILFYFTNC), serve as a signal peptide directing secretion. The region spanning 15–399 (IEWHKFETSE…IPRMKKILKM (385 aa)) is the Sema domain.

Belongs to the semaphorin family. In terms of assembly, interacts with host VESPR.

Its subcellular location is the secreted. Acts as a semaphorin-like protein and binds to host plexin C1 receptor. May alter the movement of plexin C1-expressing cells including dendritic cells, monocytes, or granulocytes in the proximity of infected cells. May also regulate host cell cytoskeleton of neighboring cells to improve viral infection. The polypeptide is Semaphorin-like protein 139 (EVM139) (Ectromelia virus (strain Moscow) (ECTV)).